The sequence spans 110 residues: uncharacterized protein (110 aa).

It belongs to the RuBisCO large chain family.

It localises to the mitochondrion. This is an uncharacterized protein from Arabidopsis thaliana (Mouse-ear cress).